Here is a 228-residue protein sequence, read N- to C-terminus: Thiamine-phosphate synthase (228 aa).

Residues 57 to 61 and Asn89 contribute to the 4-amino-2-methyl-5-(diphosphooxymethyl)pyrimidine site; that span reads QLRDK. Asp90 and Asp109 together coordinate Mg(2+). Ser128 lines the 4-amino-2-methyl-5-(diphosphooxymethyl)pyrimidine pocket. 154 to 156 lines the 2-[(2R,5Z)-2-carboxy-4-methylthiazol-5(2H)-ylidene]ethyl phosphate pocket; the sequence is TPS. Lys157 is a binding site for 4-amino-2-methyl-5-(diphosphooxymethyl)pyrimidine. 2-[(2R,5Z)-2-carboxy-4-methylthiazol-5(2H)-ylidene]ethyl phosphate contacts are provided by residues Gly185 and 205–206; that span reads IS.

The protein belongs to the thiamine-phosphate synthase family. Mg(2+) is required as a cofactor.

The enzyme catalyses 2-[(2R,5Z)-2-carboxy-4-methylthiazol-5(2H)-ylidene]ethyl phosphate + 4-amino-2-methyl-5-(diphosphooxymethyl)pyrimidine + 2 H(+) = thiamine phosphate + CO2 + diphosphate. It catalyses the reaction 2-(2-carboxy-4-methylthiazol-5-yl)ethyl phosphate + 4-amino-2-methyl-5-(diphosphooxymethyl)pyrimidine + 2 H(+) = thiamine phosphate + CO2 + diphosphate. It carries out the reaction 4-methyl-5-(2-phosphooxyethyl)-thiazole + 4-amino-2-methyl-5-(diphosphooxymethyl)pyrimidine + H(+) = thiamine phosphate + diphosphate. Its pathway is cofactor biosynthesis; thiamine diphosphate biosynthesis; thiamine phosphate from 4-amino-2-methyl-5-diphosphomethylpyrimidine and 4-methyl-5-(2-phosphoethyl)-thiazole: step 1/1. Condenses 4-methyl-5-(beta-hydroxyethyl)thiazole monophosphate (THZ-P) and 2-methyl-4-amino-5-hydroxymethyl pyrimidine pyrophosphate (HMP-PP) to form thiamine monophosphate (TMP). The chain is Thiamine-phosphate synthase from Roseiflexus castenholzii (strain DSM 13941 / HLO8).